A 153-amino-acid chain; its full sequence is ORM1-like protein 2 (153 aa).

At methionine 1–glycine 21 the chain is on the cytoplasmic side. The next 2 helical transmembrane spans lie at isoleucine 22–phenylalanine 42 and phenylalanine 43–phenylalanine 63. The Cytoplasmic segment spans residues leucine 64–serine 105. Residues proline 106 to isoleucine 126 traverse the membrane as a helical segment. Residues asparagine 127–tyrosine 153 are Extracellular-facing.

This sequence belongs to the ORM family. As to quaternary structure, ceramide-sensitive subunit of the serine palmitoyltransferase (SPT) complex, which is also composed of SPTLC1, SPTLC2/3 and SPTSSA/B. In terms of tissue distribution, widely expressed. Expressed in adult and fetal heart, brain, lung, liver, skeletal muscle and kidney. Expressed in adult pancreas and placenta and in fetal spleen abd thymus.

The protein localises to the endoplasmic reticulum membrane. Functionally, plays an essential role in the homeostatic regulation of sphingolipid de novo biosynthesis by modulating the activity of the serine palmitoyltransferase (SPT) in response to ceramide levels. When complexed to SPT, the binding of ceramides to its N-terminus stabilizes a conformation that block SPT substrate entry, hence preventing SPT catalytic activity. Through this mechanism, maintains ceramide levels at sufficient concentrations for the production of complex sphingolipids, but which prevents the accumulation of ceramides to levels that trigger apoptosis. This Homo sapiens (Human) protein is ORM1-like protein 2 (ORMDL2).